The chain runs to 480 residues: MFVTAYFAVISLLALCVGLELTARRLTPPESSAAVNPAFRRFQATFLRAYLLALWADWLQGPYLYKLYRHYSFLESQIAILYVCGLASCVLFAPFSGWLSQALGRRHMCIFFCLSYATCCLTKLSRDYFVLIVGRILGGLSTSLLTTTFESWYVHHHVEIHDFPKEWIPTTFTKAATWNHGLAVGAGLVANLLAEWLHLGPVAPFLLAVPFLACCAWFVLTDWAKEEAEKSPEGIKQTLPLGTLNGGVTHLSARARFSRSCSDGLRCMLSDKRVMLLGGVQALFESVLYIFIFLWTPVLDPHGSPLGIVFSCFMAASMVGSLLFRVATSTRYHLQPGHVLCVAVLMAFFSFFMLTFSTVPGQPRPHESFLAFLLLELACGLYFPALNFLQGRIIPEEKRASVLAWFRLPLHLLACLGLLALHGEVSGTGAGETGSGTRHMFGGCAVMMLAALMAVVSLFTLGRNDTDLKLEGSRGEGEMY.

The next 12 helical transmembrane spans lie at 1–21, 44–63, 78–98, 129–149, 177–197, 199–219, 274–294, 304–324, 339–359, 369–389, 401–421, and 441–461; these read MFVT…GLEL, ATFL…QGPY, IAIL…FSGW, FVLI…TTTF, TWNH…AEWL, LGPV…AWFV, VMLL…FIFL, SPLG…SLLF, VLCV…FSTV, FLAF…LNFL, SVLA…LLAL, and FGGC…LFTL.

It belongs to the major facilitator superfamily.

The protein resides in the cell membrane. Mediates high-affinity intracellular uptake of the rare oligo-element molybdenum. In Takifugu rubripes (Japanese pufferfish), this protein is Molybdate-anion transporter (mfsd5).